The following is an 89-amino-acid chain: Small ribosomal subunit protein uS15 (89 aa).

The protein belongs to the universal ribosomal protein uS15 family. As to quaternary structure, part of the 30S ribosomal subunit. Forms a bridge to the 50S subunit in the 70S ribosome, contacting the 23S rRNA.

One of the primary rRNA binding proteins, it binds directly to 16S rRNA where it helps nucleate assembly of the platform of the 30S subunit by binding and bridging several RNA helices of the 16S rRNA. Functionally, forms an intersubunit bridge (bridge B4) with the 23S rRNA of the 50S subunit in the ribosome. This Shewanella piezotolerans (strain WP3 / JCM 13877) protein is Small ribosomal subunit protein uS15.